A 421-amino-acid chain; its full sequence is D-amino acid dehydrogenase (421 aa).

3–17 (VIVLGSGVIGVASAY) provides a ligand contact to FAD.

This sequence belongs to the DadA oxidoreductase family. It depends on FAD as a cofactor.

The catalysed reaction is a D-alpha-amino acid + A + H2O = a 2-oxocarboxylate + AH2 + NH4(+). It participates in amino-acid degradation; D-alanine degradation; NH(3) and pyruvate from D-alanine: step 1/1. Its function is as follows. Oxidative deamination of D-amino acids. In Acinetobacter baumannii (strain AB307-0294), this protein is D-amino acid dehydrogenase.